A 201-amino-acid chain; its full sequence is FMN-dependent NADH:quinone oxidoreductase (201 aa).

Residues Ser-10, 16–18, 95–98, and 139–142 contribute to the FMN site; these read SQS, MYNF, and TTGG.

Belongs to the azoreductase type 1 family. In terms of assembly, homodimer. FMN serves as cofactor.

It catalyses the reaction 2 a quinone + NADH + H(+) = 2 a 1,4-benzosemiquinone + NAD(+). It carries out the reaction N,N-dimethyl-1,4-phenylenediamine + anthranilate + 2 NAD(+) = 2-(4-dimethylaminophenyl)diazenylbenzoate + 2 NADH + 2 H(+). Functionally, quinone reductase that provides resistance to thiol-specific stress caused by electrophilic quinones. In terms of biological role, also exhibits azoreductase activity. Catalyzes the reductive cleavage of the azo bond in aromatic azo compounds to the corresponding amines. The sequence is that of FMN-dependent NADH:quinone oxidoreductase from Tolumonas auensis (strain DSM 9187 / NBRC 110442 / TA 4).